Consider the following 491-residue polypeptide: Glutamyl-tRNA(Gln) amidotransferase subunit A (491 aa).

Active-site charge relay system residues include Lys-77 and Ser-152. Ser-176 functions as the Acyl-ester intermediate in the catalytic mechanism.

The protein belongs to the amidase family. GatA subfamily. As to quaternary structure, heterotrimer of A, B and C subunits.

It carries out the reaction L-glutamyl-tRNA(Gln) + L-glutamine + ATP + H2O = L-glutaminyl-tRNA(Gln) + L-glutamate + ADP + phosphate + H(+). Allows the formation of correctly charged Gln-tRNA(Gln) through the transamidation of misacylated Glu-tRNA(Gln) in organisms which lack glutaminyl-tRNA synthetase. The reaction takes place in the presence of glutamine and ATP through an activated gamma-phospho-Glu-tRNA(Gln). This is Glutamyl-tRNA(Gln) amidotransferase subunit A from Chlamydia trachomatis serovar L2 (strain ATCC VR-902B / DSM 19102 / 434/Bu).